Here is a 947-residue protein sequence, read N- to C-terminus: Receptor-like protein 56 (947 aa).

An N-terminal signal peptide occupies residues 1 to 27 (MEGKVFSGQKLILVMLLLGHLHGFSSC). The Extracellular segment spans residues 28–899 (IEKERKALLE…EDDKEVAIDM (872 aa)). 3 N-linked (GlcNAc...) asparagine glycosylation sites follow: Asn60, Asn75, and Asn98. LRR repeat units lie at residues 105 to 128 (FEEVRSLDLSNSRLNGLVDDVEGY), 134 to 157 (LRNLQILNFSSNEFNNSIFPFLNA), 159 to 182 (TSLTTLSLRRNNMYGPIPLKELKN), 183 to 207 (LTNLELLDLSGNRIDGSMPVREFPY), 209 to 232 (KKLKALDLSSNGIYSSMEWQGLKN), 233 to 257 (LTNLEVLSLGYNYFDGPIPIEVFCE), 259 to 281 (KNLQELDLRGINFVGQLPLCFGN), 282 to 305 (LNKLRFLDLSSNQLTGNIPPSFSS), and 307 to 330 (ESLEYLSLSDNSFEGFFSLNPLTN). N-linked (GlcNAc...) asparagine glycans are attached at residues Asn141, Asn148, and Asn182. Residue Asn232 is glycosylated (N-linked (GlcNAc...) asparagine). Asn330 carries an N-linked (GlcNAc...) asparagine glycan. An LRR 10; degenerate repeat occupies 332-356 (TKLKVFIFSSKDDMVQVKIESTWQP). LRR repeat units lie at residues 357-380 (LFQLSVLVLRLCSLEKIPNFLMYQ), 381-404 (KNLHVVDLSGNRISGIIPTWLLEN), 405-427 (NPELEVLQLKNNSFTIFQMPTSV), 428-450 (HNLQVLDFSENNIGGLFPDNFGR), 452-476 (LPNLVHMNGSNNGFQGNFPSSMGEM), 477-500 (YNISFLDLSYNNLSGELPQSFVSS), 502-527 (FSLSILQLSHNKFSGHFLPRQTNFTS), 529-549 (IVLRINNNLFTGKIGVGLLTL), 550-575 (VDLCILDMSNNFLEGELPPLLLVFEY), 577-598 (NFLDLSGNLLSGALPSHVSLDN), 600-616 (LFLHNNNFTGPIPDTFL), 617-640 (GSIQILDLRNNKLSGNIPQFVDTQ), 642-663 (ISFLLLRGNSLTGYIPSTLCEF), 664-686 (SKMRLLDLSDNKLNGFIPSCFNN), 757-780 (LNSMYGLDLSSNELSGVIPAELGD), 781-804 (LFKLRALNLSHNFLSSHIPDSFSK), 805-829 (LQDIESLDLSYNMLQGSIPHQLTNL), and 831-854 (SLAIFNVSYNNLSGIIPQGKQFNT). N-linked (GlcNAc...) asparagine glycosylation is present at Asn415. Asn459, Asn478, Asn488, and Asn524 each carry an N-linked (GlcNAc...) asparagine glycan. Asn606 carries an N-linked (GlcNAc...) asparagine glycan. Asn686 is a glycosylation site (N-linked (GlcNAc...) asparagine). N-linked (GlcNAc...) asparagine glycans are attached at residues Asn788, Asn828, Asn836, and Asn841. Residues 900-920 (LVFYWSTAGTYVTALIGILVL) form a helical membrane-spanning segment. Residues 921–947 (MCVDCSWRRAWLRLVDAFIASAKSKLA) lie on the Cytoplasmic side of the membrane.

The protein belongs to the RLP family.

The protein resides in the cell membrane. The polypeptide is Receptor-like protein 56 (Arabidopsis thaliana (Mouse-ear cress)).